Reading from the N-terminus, the 277-residue chain is MEPQDLHLDYGLVESILIPFIRNEIRKFGFRSVVLGLSGGIDSAVVCELAARSLGADNVLALLMPYKTSSRESLEHAQLMVDRLGIRAETMPVTGVVDAFFETRPDASRLRRGNVMARSRMLCLYDVSARDGCLVLGTSNKTELMLGYGTMFGDMASAVNPIGDLYKTQLWGLARHLGVPSELIDKQPSADLWEGQSDEADLGFSYEEVDQLLYMMLEERMERDAILAEGIAPAFYDRVRQMVVRNQYKRMMPVIAKLSSRTPGIDFRYARDWQEMK.

36-43 contributes to the ATP binding site; sequence GLSGGIDS. Residue Asp-42 coordinates Mg(2+). Arg-118 contacts deamido-NAD(+). Thr-138 serves as a coordination point for ATP. Residue Glu-143 participates in Mg(2+) binding. ATP is bound by residues Lys-167 and Ser-189.

This sequence belongs to the NAD synthetase family. In terms of assembly, homodimer.

It catalyses the reaction deamido-NAD(+) + NH4(+) + ATP = AMP + diphosphate + NAD(+) + H(+). Its pathway is cofactor biosynthesis; NAD(+) biosynthesis; NAD(+) from deamido-NAD(+) (ammonia route): step 1/1. In terms of biological role, catalyzes the ATP-dependent amidation of deamido-NAD to form NAD. Uses ammonia as a nitrogen source. This chain is NH(3)-dependent NAD(+) synthetase, found in Chlorobaculum parvum (strain DSM 263 / NCIMB 8327) (Chlorobium vibrioforme subsp. thiosulfatophilum).